Here is a 175-residue protein sequence, read N- to C-terminus: Beta-carotene hydroxylase (175 aa).

A Fatty acid hydroxylase domain is found at 11–136; that stretch reads FVTVIGMEVI…RGKEGCVSFG (126 aa).

Belongs to the sterol desaturase family.

The enzyme catalyses all-trans-beta-carotene + 4 reduced [2Fe-2S]-[ferredoxin] + 2 O2 + 4 H(+) = all-trans-zeaxanthin + 4 oxidized [2Fe-2S]-[ferredoxin] + 2 H2O. It functions in the pathway carotenoid biosynthesis; zeaxanthin biosynthesis. Its function is as follows. Catalyzes the hydroxylation reaction from beta-carotene to zeaxanthin. This is Beta-carotene hydroxylase (crtZ) from Pantoea ananas (Erwinia uredovora).